The primary structure comprises 158 residues: SsrA-binding protein (158 aa).

Residues 131 to 158 (GKKTHDKRETEKKRDWNREKARLLRDRG) are disordered. A compositionally biased stretch (basic and acidic residues) spans 136–158 (DKRETEKKRDWNREKARLLRDRG).

It belongs to the SmpB family.

The protein resides in the cytoplasm. Required for rescue of stalled ribosomes mediated by trans-translation. Binds to transfer-messenger RNA (tmRNA), required for stable association of tmRNA with ribosomes. tmRNA and SmpB together mimic tRNA shape, replacing the anticodon stem-loop with SmpB. tmRNA is encoded by the ssrA gene; the 2 termini fold to resemble tRNA(Ala) and it encodes a 'tag peptide', a short internal open reading frame. During trans-translation Ala-aminoacylated tmRNA acts like a tRNA, entering the A-site of stalled ribosomes, displacing the stalled mRNA. The ribosome then switches to translate the ORF on the tmRNA; the nascent peptide is terminated with the 'tag peptide' encoded by the tmRNA and targeted for degradation. The ribosome is freed to recommence translation, which seems to be the essential function of trans-translation. This is SsrA-binding protein from Brucella abortus biovar 1 (strain 9-941).